Reading from the N-terminus, the 70-residue chain is Large ribosomal subunit protein bL31 (70 aa).

C16, C18, C37, and C40 together coordinate Zn(2+).

It belongs to the bacterial ribosomal protein bL31 family. Type A subfamily. As to quaternary structure, part of the 50S ribosomal subunit. It depends on Zn(2+) as a cofactor.

Functionally, binds the 23S rRNA. In Psychromonas ingrahamii (strain DSM 17664 / CCUG 51855 / 37), this protein is Large ribosomal subunit protein bL31.